The chain runs to 119 residues: Autophagy-related protein 8B (119 aa).

Glycine 117 carries Phosphatidylethanolamine amidated glycine lipidation. A propeptide spans 118–119 (removed in mature form); the sequence is LL.

This sequence belongs to the ATG8 family. As to quaternary structure, interacts with ATG4. The C-terminal 2 residues are removed by ATG4 to expose Gly-117 at the C-terminus. The C-terminal Gly is then amidated with phosphatidylethanolamine by an activating system similar to that for ubiquitin.

It is found in the cytoplasmic vesicle. It localises to the autophagosome membrane. The protein resides in the vacuole membrane. Its subcellular location is the cytoplasm. The protein localises to the cytoskeleton. Its function is as follows. Ubiquitin-like modifier involved in autophagosomes formation. May mediate the delivery of the autophagosomes to the vacuole via the microtubule cytoskeleton. This chain is Autophagy-related protein 8B (ATG8B), found in Oryza sativa subsp. indica (Rice).